The following is a 208-amino-acid chain: Small ribosomal subunit protein uS4 (208 aa).

Positions 98-158 (GRLDNVVYRM…EKSKKQARIK (61 aa)) constitute an S4 RNA-binding domain.

It belongs to the universal ribosomal protein uS4 family. In terms of assembly, part of the 30S ribosomal subunit. Contacts protein S5. The interaction surface between S4 and S5 is involved in control of translational fidelity.

One of the primary rRNA binding proteins, it binds directly to 16S rRNA where it nucleates assembly of the body of the 30S subunit. In terms of biological role, with S5 and S12 plays an important role in translational accuracy. This Actinobacillus pleuropneumoniae serotype 5b (strain L20) protein is Small ribosomal subunit protein uS4.